The primary structure comprises 343 residues: Glyceraldehyde-3-phosphate dehydrogenase (343 aa).

Residues 13-14 (TI) and Gly112 each bind NAD(+). 141–143 (SCN) is a binding site for D-glyceraldehyde 3-phosphate. Residue Cys142 is the Nucleophile of the active site. An NAD(+)-binding site is contributed by Arg170. 196–197 (HA) lines the D-glyceraldehyde 3-phosphate pocket. Residue Gln303 participates in NAD(+) binding.

It belongs to the glyceraldehyde-3-phosphate dehydrogenase family. As to quaternary structure, homotetramer.

It localises to the cytoplasm. It carries out the reaction D-glyceraldehyde 3-phosphate + phosphate + NADP(+) = (2R)-3-phospho-glyceroyl phosphate + NADPH + H(+). The catalysed reaction is D-glyceraldehyde 3-phosphate + phosphate + NAD(+) = (2R)-3-phospho-glyceroyl phosphate + NADH + H(+). The protein operates within carbohydrate degradation; glycolysis; pyruvate from D-glyceraldehyde 3-phosphate: step 1/5. This is Glyceraldehyde-3-phosphate dehydrogenase (gap) from Aeropyrum pernix (strain ATCC 700893 / DSM 11879 / JCM 9820 / NBRC 100138 / K1).